The following is a 504-amino-acid chain: Lysine--tRNA ligase (504 aa).

Residues Glu411 and Glu418 each coordinate Mg(2+).

It belongs to the class-II aminoacyl-tRNA synthetase family. In terms of assembly, homodimer. It depends on Mg(2+) as a cofactor.

It is found in the cytoplasm. The catalysed reaction is tRNA(Lys) + L-lysine + ATP = L-lysyl-tRNA(Lys) + AMP + diphosphate. The protein is Lysine--tRNA ligase of Clostridium botulinum (strain Loch Maree / Type A3).